A 209-amino-acid polypeptide reads, in one-letter code: V-type ATP synthase subunit D (209 aa).

This sequence belongs to the V-ATPase D subunit family.

Its function is as follows. Produces ATP from ADP in the presence of a proton gradient across the membrane. This Anaeromyxobacter sp. (strain K) protein is V-type ATP synthase subunit D.